Here is a 513-residue protein sequence, read N- to C-terminus: Protein disulfide-isomerase 2 (513 aa).

An N-terminal signal peptide occupies residues 1 to 20 (MNKFLALLFVLALFANIAFS). 2 consecutive Thioredoxin domains span residues 21–147 (CEGH…EELK) and 355–486 (DVIG…DNAA). Active-site nucleophile residues include Cys70, Cys73, Cys406, and Cys409. Intrachain disulfides connect Cys70-Cys73 and Cys406-Cys409. The segment at 491–513 (LPSSQTDDNVESKKDSSAKHDEL) is disordered. Positions 500 to 513 (VESKKDSSAKHDEL) are enriched in basic and acidic residues. Residues 510–513 (HDEL) carry the Prevents secretion from ER motif.

This sequence belongs to the protein disulfide isomerase family.

The protein localises to the endoplasmic reticulum lumen. It carries out the reaction Catalyzes the rearrangement of -S-S- bonds in proteins.. Participates in the folding of proteins containing disulfide bonds, may be involved in glycosylation, prolyl hydroxylation and triglyceride transfer. This Dictyostelium discoideum (Social amoeba) protein is Protein disulfide-isomerase 2 (pdi2).